A 348-amino-acid polypeptide reads, in one-letter code: Anthranilate phosphoribosyltransferase (348 aa).

5-phospho-alpha-D-ribose 1-diphosphate is bound by residues glycine 81, 84 to 85 (GD), 91 to 94 (NVST), 109 to 117 (KHGNRAVSG), and serine 121. Glycine 81 serves as a coordination point for anthranilate. Serine 93 serves as a coordination point for Mg(2+). Residue asparagine 112 coordinates anthranilate. Arginine 167 lines the anthranilate pocket. Residues aspartate 226 and glutamate 227 each contribute to the Mg(2+) site.

Belongs to the anthranilate phosphoribosyltransferase family. As to quaternary structure, homodimer. Mg(2+) serves as cofactor.

It carries out the reaction N-(5-phospho-beta-D-ribosyl)anthranilate + diphosphate = 5-phospho-alpha-D-ribose 1-diphosphate + anthranilate. It participates in amino-acid biosynthesis; L-tryptophan biosynthesis; L-tryptophan from chorismate: step 2/5. Functionally, catalyzes the transfer of the phosphoribosyl group of 5-phosphorylribose-1-pyrophosphate (PRPP) to anthranilate to yield N-(5'-phosphoribosyl)-anthranilate (PRA). This Stutzerimonas stutzeri (strain A1501) (Pseudomonas stutzeri) protein is Anthranilate phosphoribosyltransferase.